We begin with the raw amino-acid sequence, 253 residues long: Pupal cuticle protein (253 aa).

Residues 1–18 (MKSMIVVACLALACGAHA) form the signal peptide. Positions 54-66 (LQQASKNNPNPND) are enriched in polar residues. Residues 54 to 74 (LQQASKNNPNPNDDGSYDPRW) form a disordered region. A run of 3 repeats spans residues 97-100 (AAPA), 115-118 (AAPA), and 154-157 (AAPA). Residues 155–167 (APAQQQWNAPAHQ) show a composition bias toward low complexity. 2 disordered regions span residues 155–178 (APAQQQWNAPAHQDWNAPAHQDWN) and 187–206 (APAHQSWNGAPSWQSGAPAH). Residues 189 to 201 (AHQSWNGAPSWQS) are compositionally biased toward polar residues.

Its function is as follows. Component of the cuticle of the pupae of silk moth. In Bombyx mori (Silk moth), this protein is Pupal cuticle protein (PCP).